Here is a 479-residue protein sequence, read N- to C-terminus: Proline--tRNA ligase (479 aa).

Belongs to the class-II aminoacyl-tRNA synthetase family. ProS type 3 subfamily. As to quaternary structure, homodimer.

The protein resides in the cytoplasm. The enzyme catalyses tRNA(Pro) + L-proline + ATP = L-prolyl-tRNA(Pro) + AMP + diphosphate. In terms of biological role, catalyzes the attachment of proline to tRNA(Pro) in a two-step reaction: proline is first activated by ATP to form Pro-AMP and then transferred to the acceptor end of tRNA(Pro). The chain is Proline--tRNA ligase from Lachnospira eligens (strain ATCC 27750 / DSM 3376 / VPI C15-48 / C15-B4) (Eubacterium eligens).